The primary structure comprises 468 residues: UDP-glycosyltransferase 89B2 (468 aa).

UDP-alpha-D-glucose-binding positions include Ser287, 347–348, 365–373, and 387–390; these read WV, HCGWNSVME, and SADQ.

The protein belongs to the UDP-glycosyltransferase family.

May glycosylate diterpenes or flavonols in leaves. This chain is UDP-glycosyltransferase 89B2, found in Stevia rebaudiana (Stevia).